Here is a 275-residue protein sequence, read N- to C-terminus: NH(3)-dependent NAD(+) synthetase (275 aa).

ATP is bound at residue 46–53; that stretch reads GISGGQDS. Asp-52 provides a ligand contact to Mg(2+). Position 140 (Arg-140) interacts with deamido-NAD(+). Thr-160 serves as a coordination point for ATP. Glu-165 lines the Mg(2+) pocket. Deamido-NAD(+)-binding residues include Lys-173 and Asp-180. ATP-binding residues include Lys-189 and Thr-211. A deamido-NAD(+)-binding site is contributed by 260–261; that stretch reads HK.

It belongs to the NAD synthetase family. Homodimer.

The enzyme catalyses deamido-NAD(+) + NH4(+) + ATP = AMP + diphosphate + NAD(+) + H(+). It participates in cofactor biosynthesis; NAD(+) biosynthesis; NAD(+) from deamido-NAD(+) (ammonia route): step 1/1. Functionally, catalyzes the ATP-dependent amidation of deamido-NAD to form NAD. Uses ammonia as a nitrogen source. This Escherichia coli (strain K12 / MC4100 / BW2952) protein is NH(3)-dependent NAD(+) synthetase.